We begin with the raw amino-acid sequence, 723 residues long: Protein Aster-A (723 aa).

Residues 1 to 18 (MFDTTPHSGRSSPSSSPS) show a composition bias toward low complexity. Residues 1-63 (MFDTTPHSGR…SGVSGTLSTQ (63 aa)) form a disordered region. Positions 28–38 (PSRPPSAPEPE) are enriched in pro residues. In terms of domain architecture, GRAM spans 93-160 (EDFRKLFSKL…KEVTCLKKEK (68 aa)). Residues 257–337 (SPSGAADRSQ…DGPTSNLGPL (81 aa)) are disordered. 3 positions are modified to phosphoserine: Ser265, Ser269, and Ser273. Positions 302–314 (DSQLDASSSQTVT) are enriched in polar residues. The VASt domain occupies 370–541 (SGRLLINSVF…ELAKAEKVSL (172 aa)). Ser418 is modified (phosphoserine). A disordered region spans residues 562–601 (LSWRGHRDGPQHPDPDPCTQTSMHTSGSLSSRFSEPSVDQ). Residues 566–576 (GHRDGPQHPDP) show a composition bias toward basic and acidic residues. A compositionally biased stretch (polar residues) spans 579 to 595 (CTQTSMHTSGSLSSRFS). A helical membrane pass occupies residues 610–630 (ALVLISIVLIVLIALNALLFY).

Its subcellular location is the endoplasmic reticulum membrane. The protein localises to the cell membrane. It localises to the cytoplasmic vesicle. It is found in the autophagosome. Functionally, cholesterol transporter that mediates non-vesicular transport of cholesterol from the plasma membrane (PM) to the endoplasmic reticulum (ER). Contains unique domains for binding cholesterol and the PM, thereby serving as a molecular bridge for the transfer of cholesterol from the PM to the ER. Plays a crucial role in cholesterol homeostasis and has the unique ability to localize to the PM based on the level of membrane cholesterol. In lipid-poor conditions localizes to the ER membrane and in response to excess cholesterol in the PM is recruited to the endoplasmic reticulum-plasma membrane contact sites (EPCS) which is mediated by the GRAM domain. At the EPCS, the sterol-binding VASt/ASTER domain binds to the cholesterol in the PM and facilitates its transfer from the PM to ER. May play a role in tumor progression. Plays a role in autophagy regulation and is required for biogenesis of the autophagosome. This function in autophagy requires its cholesterol-transfer activity. In Rattus norvegicus (Rat), this protein is Protein Aster-A.